Reading from the N-terminus, the 499-residue chain is Cobyric acid synthase (499 aa).

Residues 246–441 (PIDIAIIKLP…IHGIFDGAEL (196 aa)) form the GATase cobBQ-type domain. Residue C327 is the Nucleophile of the active site. Residue H433 is part of the active site.

This sequence belongs to the CobB/CobQ family. CobQ subfamily.

Its pathway is cofactor biosynthesis; adenosylcobalamin biosynthesis. Catalyzes amidations at positions B, D, E, and G on adenosylcobyrinic A,C-diamide. NH(2) groups are provided by glutamine, and one molecule of ATP is hydrogenolyzed for each amidation. The sequence is that of Cobyric acid synthase from Clostridium kluyveri (strain NBRC 12016).